We begin with the raw amino-acid sequence, 366 residues long: Beta sliding clamp (366 aa).

The protein belongs to the beta sliding clamp family. Forms a ring-shaped head-to-tail homodimer around DNA which binds and tethers DNA polymerases and other proteins to the DNA. The DNA replisome complex has a single clamp-loading complex (3 tau and 1 each of delta, delta', psi and chi subunits) which binds 3 Pol III cores (1 core on the leading strand and 2 on the lagging strand) each with a beta sliding clamp dimer. Additional proteins in the replisome are other copies of gamma, psi and chi, Ssb, DNA helicase and RNA primase.

It is found in the cytoplasm. In terms of biological role, confers DNA tethering and processivity to DNA polymerases and other proteins. Acts as a clamp, forming a ring around DNA (a reaction catalyzed by the clamp-loading complex) which diffuses in an ATP-independent manner freely and bidirectionally along dsDNA. Initially characterized for its ability to contact the catalytic subunit of DNA polymerase III (Pol III), a complex, multichain enzyme responsible for most of the replicative synthesis in bacteria; Pol III exhibits 3'-5' exonuclease proofreading activity. The beta chain is required for initiation of replication as well as for processivity of DNA replication. In Salmonella typhimurium (strain LT2 / SGSC1412 / ATCC 700720), this protein is Beta sliding clamp (dnaN).